Here is a 607-residue protein sequence, read N- to C-terminus: Phosphogluconate dehydratase (607 aa).

[4Fe-4S] cluster is bound by residues Cys-156 and Cys-223.

Belongs to the IlvD/Edd family. [4Fe-4S] cluster is required as a cofactor.

It carries out the reaction 6-phospho-D-gluconate = 2-dehydro-3-deoxy-6-phospho-D-gluconate + H2O. The protein operates within carbohydrate metabolism; Entner-Doudoroff pathway. Catalyzes the dehydration of 6-phospho-D-gluconate to 2-dehydro-3-deoxy-6-phospho-D-gluconate. The polypeptide is Phosphogluconate dehydratase (Zymomonas mobilis subsp. mobilis (strain ATCC 31821 / ZM4 / CP4)).